The primary structure comprises 378 residues: Phospho-N-acetylmuramoyl-pentapeptide-transferase (378 aa).

10 consecutive transmembrane segments (helical) span residues 27–47 (TAFASLTALFLCIALGPWLIN), 74–94 (TMGGVLIVISIVIPTLLWADL), 96–116 (YPYVWIALAGLLGYGWIGFLD), 135–155 (LVYQFIMGFAFAASLLVMRAY), 184–204 (WTYVIGVAPFCIFVALVVVFY), 216–236 (GLAIGLMVIAAGALTVLAYAG), 256–276 (LTIFCGSMTGASLGFLWYNAH), 280–300 (IFMGDVGSLGLGGAMAVVAVL), 305–325 (ILLLFIGGIFVLEAFSVILQV), and 355–375 (KIIARFWIAGLVLALFALTTL).

The protein belongs to the glycosyltransferase 4 family. MraY subfamily. It depends on Mg(2+) as a cofactor.

It localises to the cell inner membrane. The catalysed reaction is UDP-N-acetyl-alpha-D-muramoyl-L-alanyl-gamma-D-glutamyl-meso-2,6-diaminopimeloyl-D-alanyl-D-alanine + di-trans,octa-cis-undecaprenyl phosphate = di-trans,octa-cis-undecaprenyl diphospho-N-acetyl-alpha-D-muramoyl-L-alanyl-D-glutamyl-meso-2,6-diaminopimeloyl-D-alanyl-D-alanine + UMP. It functions in the pathway cell wall biogenesis; peptidoglycan biosynthesis. Functionally, catalyzes the initial step of the lipid cycle reactions in the biosynthesis of the cell wall peptidoglycan: transfers peptidoglycan precursor phospho-MurNAc-pentapeptide from UDP-MurNAc-pentapeptide onto the lipid carrier undecaprenyl phosphate, yielding undecaprenyl-pyrophosphoryl-MurNAc-pentapeptide, known as lipid I. In Solibacter usitatus (strain Ellin6076), this protein is Phospho-N-acetylmuramoyl-pentapeptide-transferase.